A 182-amino-acid polypeptide reads, in one-letter code: Vacuolar protein sorting-associated protein 29 (182 aa).

The residue at position 50 (lysine 50) is an N6-acetyllysine.

Belongs to the VPS29 family. As to quaternary structure, component of the commander complex consisting of the CCC subcomplex and the retriever subcomplex. Component of the heterotrimeric retriever complex formed by VPS26C, VPS29 and VPS35L; within the complex interacts with VPS35L. Component of the heterotrimeric retromer cargo-selective complex (CSC), also described as vacuolar protein sorting subcomplex (VPS), formed by VPS26 (VPS26A or VPS26B), VPS29 and VPS35. The CSC has a highly elongated structure with VPS26 and VPS29 binding independently at opposite distal ends of VPS35 as central platform. The CSC is believed to associate with variable sorting nexins to form functionally distinct retromer complex variants. The originally described retromer complex (also called SNX-BAR retromer) is a pentamer containing the CSC and a heterodimeric membrane-deforming subcomplex formed between SNX1 or SNX2 and SNX5 or SNX6 (also called SNX-BAR subcomplex); the respective CSC and SNX-BAR subcomplexes associate with low affinity. The CSC associates with SNX3 to form a SNX3-retromer complex. The CSC associates with SNX27, the WASH complex and the SNX-BAR subcomplex to form the SNX27-retromer complex. Interacts with VPS26A, VPS35, SNX1, SNX2, SNX3, SNX27, WASHC5. Interacts with TBC1D5; this interaction is blocked by VPS35L in the retriever complex. Interacts with SNX17; the interaction is indirect; SNX17 (via its C-terminus) interacts with the retriever complex (via VPS26C and VPS35L). Interacts with VPS26B and ANKRD27.

The protein localises to the cytoplasm. Its subcellular location is the membrane. The protein resides in the endosome membrane. It localises to the early endosome. It is found in the late endosome. Its function is as follows. Component of the commander complex that is essential for endosomal recycling of transmembrane cargos; the commander complex is composed of the CCC subcomplex and the retriever subcomplex. Component of the retriever complex, which is a heterotrimeric complex related to retromer cargo-selective complex (CSC) and essential for retromer-independent retrieval and recycling of numerous cargos such as integrin alpha-5/beta-1 (ITGA5:ITGB1). Component of the retromer cargo-selective complex (CSC). The CSC is believed to be the core functional component of retromer or respective retromer complex variants acting to prevent missorting of selected transmembrane cargo proteins into the lysosomal degradation pathway. The recruitment of the CSC to the endosomal membrane involves RAB7A and SNX3. The SNX-BAR retromer mediates retrograde transport of cargo proteins from endosomes to the trans-Golgi network (TGN) and is involved in endosome-to-plasma membrane transport for cargo protein recycling. The SNX3-retromer mediates the retrograde endosome-to-TGN transport of WLS distinct from the SNX-BAR retromer pathway. The SNX27-retromer is believed to be involved in endosome-to-plasma membrane trafficking and recycling of a broad spectrum of cargo proteins. The CSC seems to act as recruitment hub for other proteins, such as the WASH complex and TBC1D5. Required to regulate transcytosis of the polymeric immunoglobulin receptor (pIgR-pIgA). In the endosomes, retriever complex drives the retrieval and recycling of NxxY-motif-containing cargo proteins by coupling to SNX17, a cargo essential for the homeostatic maintenance of numerous cell surface proteins associated with processes that include cell migration, cell adhesion, nutrient supply and cell signaling. The recruitment of the retriever complex to the endosomal membrane involves CCC and WASH complexes. Involved in GLUT1 endosome-to-plasma membrane trafficking; the function is dependent of association with ANKRD27. This chain is Vacuolar protein sorting-associated protein 29, found in Rattus norvegicus (Rat).